The primary structure comprises 1292 residues: Calcium-transporting ATPase 2 (1292 aa).

The tract at residues 1–105 (MPTYNDDDDS…EQASSKSSTS (105 aa)) is disordered. Topologically, residues 1–236 (MPTYNDDDDS…RLMLEAFKDK (236 aa)) are cytoplasmic. Polar residues predominate over residues 23–41 (KPSSSQFLGVPSSNYNQRE). The segment covering 44–60 (SRSGSSTISREPSSSGT) has biased composition (low complexity). Residues 68 to 78 (DSMKESYDKNK) show a composition bias toward basic and acidic residues. Residues 237–257 (VLILLSIAAVVSLALGLYQTF) traverse the membrane as a helical segment. The Vacuolar segment spans residues 258-273 (GQPPTLDPITGKPEPR). A helical transmembrane segment spans residues 274 to 294 (VEWVEGVAIMAAIVIVVTVGG). At 295 to 448 (VNDWQKELQF…QLRLSRVADA (154 aa)) the chain is on the cytoplasmic side. Residues 449–469 (IAKLGGAASALLFIVLLIEFL) traverse the membrane as a helical segment. Residues 470 to 488 (VRLKSNDSSSKNKGQEFLQ) lie on the Vacuolar side of the membrane. The helical transmembrane segment at 489–509 (ILIVSVTLLVVAVPEGLPLAV) threads the bilayer. Ca(2+)-binding residues include Val498 and Glu503. The Cytoplasmic segment spans residues 510–938 (TLALAFATNR…GRTVNDAVKK (429 aa)). Asp545 functions as the 4-aspartylphosphate intermediate in the catalytic mechanism. Mg(2+) is bound by residues Asp545 and Thr547. ATP contacts are provided by residues Thr547, Glu638, Lys691, Arg736, 807–809 (TGD), Arg856, and Lys862. Asp881 is a Mg(2+) binding site. Asn884 serves as a coordination point for ATP. A helical membrane pass occupies residues 939–959 (FLQFQITVNITAVFLTIISAV). Asn947 contacts Ca(2+). The Vacuolar segment spans residues 960–966 (ASTDQSS). The helical transmembrane segment at 967–987 (VLTAVQLLWVNLIMDTLAALA) threads the bilayer. Asn977 and Asp981 together coordinate Ca(2+). Topologically, residues 988 to 1016 (LATDPPTPEVLKRKPEKPGASLFTFDMWK) are cytoplasmic. A helical membrane pass occupies residues 1017-1037 (MIICQSMYQLAVTLVLHFAGN). Over 1038 to 1084 (SIFHYPSNTADMNTIVFNTFVWLQLFNEINNRRLDNKLNIFERINHN) the chain is Vacuolar. A helical transmembrane segment spans residues 1085-1105 (FLFIAIFVIVAGIQVIIVFFG). At 1106–1115 (GAAFSVKRID) the chain is on the cytoplasmic side. The chain crosses the membrane as a helical span at residues 1116–1136 (GKGWAISIVFGVISIPLGALI). The Vacuolar segment spans residues 1137 to 1292 (RCVPNNFLRK…ALDKKSSNVH (156 aa)).

This sequence belongs to the cation transport ATPase (P-type) (TC 3.A.3) family.

It localises to the vacuole membrane. The catalysed reaction is Ca(2+)(in) + ATP + H2O = Ca(2+)(out) + ADP + phosphate + H(+). Its function is as follows. This magnesium-dependent enzyme catalyzes the hydrolysis of ATP coupled with the transport of calcium. Transports the calcium to the vacuole and participates in the control of the cytosolic free calcium. The polypeptide is Calcium-transporting ATPase 2 (pmc1) (Schizosaccharomyces pombe (strain 972 / ATCC 24843) (Fission yeast)).